Consider the following 239-residue polypeptide: Large ribosomal subunit protein bL25 (239 aa).

Positions 217–239 (IKAEAHAAEGTQAEGSTEEGQQQ) are disordered. Residues 229 to 239 (AEGSTEEGQQQ) show a composition bias toward polar residues.

Belongs to the bacterial ribosomal protein bL25 family. CTC subfamily. In terms of assembly, part of the 50S ribosomal subunit; part of the 5S rRNA/L5/L18/L25 subcomplex. Contacts the 5S rRNA. Binds to the 5S rRNA independently of L5 and L18.

Functionally, this is one of the proteins that binds to the 5S RNA in the ribosome where it forms part of the central protuberance. This is Large ribosomal subunit protein bL25 from Deinococcus deserti (strain DSM 17065 / CIP 109153 / LMG 22923 / VCD115).